The following is a 522-amino-acid chain: Sugar carrier protein A (522 aa).

The Cytoplasmic portion of the chain corresponds to 1-22; it reads MAGGSLAPAGVAKERAEQYQGK. 12 helical membrane passes run 23–43, 87–107, 121–141, 144–164, 173–193, 205–225, 286–306, 322–342, 351–371, 384–404, 430–450, and 453–473; these read VTFA…IFGY, AFTS…GPIT, ISFL…MLLL, IMLG…LSEM, LNIM…MVNY, LSLG…LLLP, LVMA…IILF, ALYS…ISIA, FLLI…AIIL, SFSV…GWSW, AVNL…LCAF, and GIFL…YIFL. Topologically, residues 474–522 are cytoplasmic; it reads PETKGVPIEEMIFLWRKHWFWKKIVPGQPEVDDSRESMEMGEAVASRIK.

Belongs to the major facilitator superfamily. Sugar transporter (TC 2.A.1.1) family.

The protein localises to the membrane. This chain is Sugar carrier protein A (STA), found in Ricinus communis (Castor bean).